Here is a 25-residue protein sequence, read N- to C-terminus: Large ribosomal subunit protein uL30 (25 aa).

Belongs to the universal ribosomal protein uL30 family. As to quaternary structure, part of the 50S ribosomal subunit.

The protein is Large ribosomal subunit protein uL30 (rpmD) of Pseudomonas putida (Arthrobacter siderocapsulatus).